Here is a 142-residue protein sequence, read N- to C-terminus: Universal stress protein D (142 aa).

It belongs to the universal stress protein A family.

It localises to the cytoplasm. Functionally, required for resistance to DNA-damaging agents. The protein is Universal stress protein D (uspD) of Escherichia coli O157:H7.